Consider the following 267-residue polypeptide: Glutamate racemase (267 aa).

Substrate-binding positions include 9–10 and 41–42; these read DS and YG. Residue Cys72 is the Proton donor/acceptor of the active site. Substrate is bound at residue 73–74; the sequence is NT. Cys184 (proton donor/acceptor) is an active-site residue. Position 185–186 (185–186) interacts with substrate; it reads TH.

The protein belongs to the aspartate/glutamate racemases family.

It catalyses the reaction L-glutamate = D-glutamate. It functions in the pathway cell wall biogenesis; peptidoglycan biosynthesis. In terms of biological role, provides the (R)-glutamate required for cell wall biosynthesis. The protein is Glutamate racemase of Staphylococcus epidermidis (strain ATCC 12228 / FDA PCI 1200).